Reading from the N-terminus, the 86-residue chain is YcgL domain-containing protein IL1825 (86 aa).

Positions 1-85 constitute a YcgL domain; the sequence is MLCDVYRSSK…KREELQVNVN (85 aa).

In Idiomarina loihiensis (strain ATCC BAA-735 / DSM 15497 / L2-TR), this protein is YcgL domain-containing protein IL1825.